We begin with the raw amino-acid sequence, 292 residues long: Mycothiol acetyltransferase (292 aa).

2 consecutive N-acetyltransferase domains span residues 13–168 (ALDR…KWLQ) and 159–292 (KSVA…VYEK). A 1D-myo-inositol 2-(L-cysteinylamino)-2-deoxy-alpha-D-glucopyranoside-binding site is contributed by E40. Acetyl-CoA is bound at residue 77-79 (LAV). The 1D-myo-inositol 2-(L-cysteinylamino)-2-deoxy-alpha-D-glucopyranoside site is built by E179, K218, and E226. Acetyl-CoA-binding positions include 230–232 (VGL) and 237–243 (RGRGLGD). Y264 provides a ligand contact to 1D-myo-inositol 2-(L-cysteinylamino)-2-deoxy-alpha-D-glucopyranoside.

It belongs to the acetyltransferase family. MshD subfamily. As to quaternary structure, monomer.

The enzyme catalyses 1D-myo-inositol 2-(L-cysteinylamino)-2-deoxy-alpha-D-glucopyranoside + acetyl-CoA = mycothiol + CoA + H(+). In terms of biological role, catalyzes the transfer of acetyl from acetyl-CoA to desacetylmycothiol (Cys-GlcN-Ins) to form mycothiol. The chain is Mycothiol acetyltransferase from Corynebacterium glutamicum (strain ATCC 13032 / DSM 20300 / JCM 1318 / BCRC 11384 / CCUG 27702 / LMG 3730 / NBRC 12168 / NCIMB 10025 / NRRL B-2784 / 534).